Consider the following 333-residue polypeptide: GTP 3',8-cyclase (333 aa).

The 215-residue stretch at 7–221 (KFGRVHDYIR…FEACNEAGYE (215 aa)) folds into the Radical SAM core domain. GTP is bound at residue R16. [4Fe-4S] cluster is bound by residues C23 and C27. Residue Y29 coordinates S-adenosyl-L-methionine. Position 30 (C30) interacts with [4Fe-4S] cluster. Residue R66 coordinates GTP. Residue G70 coordinates S-adenosyl-L-methionine. T97 contributes to the GTP binding site. S121 provides a ligand contact to S-adenosyl-L-methionine. K158 contacts GTP. M192 is an S-adenosyl-L-methionine binding site. C257 and C260 together coordinate [4Fe-4S] cluster. 262–264 (RLR) provides a ligand contact to GTP. C274 serves as a coordination point for [4Fe-4S] cluster.

The protein belongs to the radical SAM superfamily. MoaA family. In terms of assembly, monomer and homodimer. The cofactor is [4Fe-4S] cluster.

The catalysed reaction is GTP + AH2 + S-adenosyl-L-methionine = (8S)-3',8-cyclo-7,8-dihydroguanosine 5'-triphosphate + 5'-deoxyadenosine + L-methionine + A + H(+). It functions in the pathway cofactor biosynthesis; molybdopterin biosynthesis. In terms of biological role, catalyzes the cyclization of GTP to (8S)-3',8-cyclo-7,8-dihydroguanosine 5'-triphosphate. The protein is GTP 3',8-cyclase of Listeria monocytogenes serotype 4b (strain CLIP80459).